A 498-amino-acid chain; its full sequence is MVKIQPDEISSIIRQQIEQYSQEVKVVNVGTVFQVGDGIARIYGLEKVMAGELLEFEDGTVGIALNLEAKNVGAVLMGTGLSVQEGSSVRATGKIAQIPVGEAYLGRVVNALARPIDGKGEISADETRLIESVAPGIITRRSVHEPMQTGLISVDAMIPIGRGQRELIIGDRQTGKTAIALDTILNQKGNGVICVYVAIGQKASSIAQVVTTLEERGSLDYTIIVSATANEPATLQYLAPYTGAALAEYFMYTGRHTLVIYDDLTKQAQAYREMSLLLRRPPGREAYPGDVFYLHSRLLERAAKLNDELGSGSMTALPIVETQEGDVSAYIPTNVISITDGQIFLSADIFNANIRPAINVGISVSRVGSAAQPKAMKQVAGKLKLELAQFAELEAFSQFASDLDQATQNQLARGKRLRELLKQAQNSPLALADQVATIYAGCNGYLDTVETEEVRSFLIEFRQYLNSNKPKFGEIIRETNTLTEEAETILKEALSELL.

Position 170-177 (170-177) interacts with ATP; that stretch reads GDRQTGKT.

This sequence belongs to the ATPase alpha/beta chains family. As to quaternary structure, F-type ATPases have 2 components, CF(1) - the catalytic core - and CF(0) - the membrane proton channel. CF(1) has five subunits: alpha(3), beta(3), gamma(1), delta(1), epsilon(1). CF(0) has four main subunits: a, b, b' and c.

The protein resides in the plastid. Its subcellular location is the chloroplast thylakoid membrane. It catalyses the reaction ATP + H2O + 4 H(+)(in) = ADP + phosphate + 5 H(+)(out). Its function is as follows. Produces ATP from ADP in the presence of a proton gradient across the membrane. The alpha chain is a regulatory subunit. The protein is ATP synthase subunit alpha, chloroplastic of Oltmannsiellopsis viridis (Marine flagellate).